The primary structure comprises 561 residues: V-type proton ATPase catalytic subunit A (561 aa).

190–197 (GAFGCGKT) is an ATP binding site.

It belongs to the ATPase alpha/beta chains family. V-ATPase is a heteromultimeric enzyme composed of a peripheral catalytic V1 complex (main components: subunits A, B, C, D, E, and F) attached to an integral membrane V0 proton pore complex (main component: the proteolipid protein). In terms of tissue distribution, high expression in the mesocotyl tip of etiolated seedlings compared to the base.

It catalyses the reaction ATP + H2O + 4 H(+)(in) = ADP + phosphate + 5 H(+)(out). In terms of biological role, catalytic subunit of the peripheral V1 complex of vacuolar ATPase. V-ATPase vacuolar ATPase is responsible for acidifying a variety of intracellular compartments in eukaryotic cells. This is V-type proton ATPase catalytic subunit A from Zea mays (Maize).